We begin with the raw amino-acid sequence, 544 residues long: Chaperonin GroEL (544 aa).

ATP is bound by residues 30–33 (TLGP), Lys-51, 87–91 (DGTTT), Gly-415, 479–481 (NAA), and Asp-495.

It belongs to the chaperonin (HSP60) family. As to quaternary structure, forms a cylinder of 14 subunits composed of two heptameric rings stacked back-to-back. Interacts with the co-chaperonin GroES.

Its subcellular location is the cytoplasm. The enzyme catalyses ATP + H2O + a folded polypeptide = ADP + phosphate + an unfolded polypeptide.. Functionally, together with its co-chaperonin GroES, plays an essential role in assisting protein folding. The GroEL-GroES system forms a nano-cage that allows encapsulation of the non-native substrate proteins and provides a physical environment optimized to promote and accelerate protein folding. The chain is Chaperonin GroEL from Francisella tularensis subsp. mediasiatica (strain FSC147).